A 161-amino-acid chain; its full sequence is Suppressor of kinetochore protein 1 (161 aa).

The tract at residues 102-161 is interaction with the F-box domain of F-box proteins; sequence VLASNYLDIKPLLDTGCKTVANMIRGKSPEDIRKTFNIPNDFTPEEEEQIRKENEWAEDR.

The protein belongs to the SKP1 family. In terms of assembly, essential component of the E3 ubiquitin ligase Skp1-Cullin-1-F-box (SCF) complex. Interacts with cul1, fbh1, mcs2, pip1, pof1, pof2, pof3, pof4, pof5, pof6, pof7, pof8, pof9, pof10, pof11, pof12, pof13, pof14, pop1, pop2 and tfb3. Forms a complex with pof6 and sip1. Component of the RAVE complex composed of rav1, rav2 and skp1.

Its subcellular location is the cytoplasm. The protein localises to the nucleus. Its function is as follows. Required for cig2 degradation in the G2 and M phases of the cell cycle. Together with pof6, essential for septum processing and cell separation. Involved in mitotic progression, essential for the execution of anaphase B; required for coordinated structural alterations of mitotic spindles and segregation of nuclear membrane structures at anaphase. Involved in the DNA damage checkpoint pathway and maintenance of genome integrity. Component of the RAVE complex which is required for stable assembly of the vacuolar ATPase complex V-ATPase. In Schizosaccharomyces pombe (strain 972 / ATCC 24843) (Fission yeast), this protein is Suppressor of kinetochore protein 1.